Reading from the N-terminus, the 623-residue chain is Lamin-B2.L (623 aa).

Over residues 1-18 (MATTTPSRSTRSSMQSPA) the composition is skewed to low complexity. A disordered region spans residues 1–30 (MATTTPSRSTRSSMQSPARGTSTPLSPTRI). The segment at 2–27 (ATTTPSRSTRSSMQSPARGTSTPLSP) is head. The segment covering 19–30 (RGTSTPLSPTRI) has biased composition (polar residues). S26 is subject to Phosphoserine. Residues 28–64 (TRISRLQEKEELRHLNDRLAVYIDRVRALELENDRLM) are coil 1A. The 357-residue stretch at 35–391 (EKEELRHLND…KLLEGEEERL (357 aa)) folds into the IF rod domain. The linker 1 stretch occupies residues 64–74 (MVKISEKEEVT). A coil 1B region spans residues 75 to 211 (TREVSGIKNL…QSLQEEMDFR (137 aa)). The linker 2 stretch occupies residues 212–235 (KNIYEEESRETRKRHERRIVEVDR). The interval 236–378 (GHHYDYESKL…VKLALDLEIN (143 aa)) is coil 2. The tract at residues 380 to 592 (YRKLLEGEEE…VTKSVLRNVE (213 aa)) is tail. Disordered stretches follow at residues 388-473 (EERL…LSQQ) and 591-623 (VEEE…CSVM). S396 bears the Phosphoserine mark. Over residues 398–416 (ESRVTVSRATSSSSSATRT) the composition is skewed to low complexity. Positions 420 to 425 (KRRRVE) match the Nuclear localization signal motif. Over residues 443–473 (LGSSRITASEGSSRTITSGQSSTTRFHLSQQ) the composition is skewed to polar residues. The LTD domain occupies 468 to 585 (FHLSQQASAT…EEVAVRTVTK (118 aa)). Residues 592–604 (EEEEDEDADFGEE) show a composition bias toward acidic residues. Over residues 612-623 (DPRTTSRGCSVM) the composition is skewed to polar residues. C620 carries the post-translational modification Cysteine methyl ester. The S-farnesyl cysteine moiety is linked to residue C620. A propeptide spans 621–623 (SVM) (removed in mature form).

The protein belongs to the intermediate filament family. Post-translationally, phosphorylation plays a key role in lamin organization, subcellular localization and nuclear envelope disintegration. Phosphorylation by CDK1 at Ser-26 at the onset of mitosis drives lamin disassembly and nuclear envelope breakdown.

It is found in the nucleus lamina. The protein localises to the nucleus envelope. It localises to the nucleus. Its subcellular location is the nucleoplasm. The protein resides in the nucleus matrix. In terms of biological role, lamins are intermediate filament proteins that assemble into a filamentous meshwork, and which constitute the major components of the nuclear lamina, a fibrous layer on the nucleoplasmic side of the inner nuclear membrane. Lamins provide a framework for the nuclear envelope, bridging the nuclear envelope and chromatin, thereby playing an important role in nuclear assembly, chromatin organization, nuclear membrane and telomere dynamics. The structural integrity of the lamina is strictly controlled by the cell cycle, as seen by the disintegration and formation of the nuclear envelope in prophase and telophase, respectively. This Xenopus laevis (African clawed frog) protein is Lamin-B2.L (lmnb2.L).